The primary structure comprises 215 residues: ATP-dependent dethiobiotin synthetase BioD (215 aa).

An ATP-binding site is contributed by 13 to 18; sequence DIGKTI. Thr-17 serves as a coordination point for Mg(2+). Lys-38 is an active-site residue. Thr-42 contacts substrate. ATP-binding positions include Asp-50, 115–118, and 175–176; these read EGAG and NH. Residues Asp-50 and Glu-115 each coordinate Mg(2+).

It belongs to the dethiobiotin synthetase family. Homodimer. It depends on Mg(2+) as a cofactor.

It localises to the cytoplasm. It carries out the reaction (7R,8S)-7,8-diammoniononanoate + CO2 + ATP = (4R,5S)-dethiobiotin + ADP + phosphate + 3 H(+). Its pathway is cofactor biosynthesis; biotin biosynthesis; biotin from 7,8-diaminononanoate: step 1/2. Functionally, catalyzes a mechanistically unusual reaction, the ATP-dependent insertion of CO2 between the N7 and N8 nitrogen atoms of 7,8-diaminopelargonic acid (DAPA, also called 7,8-diammoniononanoate) to form a ureido ring. The protein is ATP-dependent dethiobiotin synthetase BioD of Neisseria meningitidis serogroup A / serotype 4A (strain DSM 15465 / Z2491).